The sequence spans 340 residues: Insulin gene enhancer protein ISL-2B (340 aa).

2 LIM zinc-binding domains span residues 9–62 (CVGC…CKRD) and 71–125 (CAKC…RADH). Positions 172-231 (TTRVRTVLNEKQLHTLRTCYNANPRPDALMKEQLVEMTGLSPRVIRVWFQNKRCKDKKRT) form a DNA-binding region, homeobox. Over residues 307–317 (ESGSMGNSSGS) the composition is skewed to low complexity. Positions 307–340 (ESGSMGNSSGSDVTSLSSQLPDTPNSMVPSPMDT) are disordered. Residues 318–340 (DVTSLSSQLPDTPNSMVPSPMDT) are compositionally biased toward polar residues.

The protein resides in the nucleus. Its function is as follows. Binds to one of the cis-acting domain of the insulin gene enhancer. May be involved in subtype specialization of primary motoneurons. This Oncorhynchus tshawytscha (Chinook salmon) protein is Insulin gene enhancer protein ISL-2B (isl2b).